Here is a 248-residue protein sequence, read N- to C-terminus: UPF0736 protein Bcer98_0893 (248 aa).

It belongs to the UPF0736 family.

In Bacillus cytotoxicus (strain DSM 22905 / CIP 110041 / 391-98 / NVH 391-98), this protein is UPF0736 protein Bcer98_0893.